The chain runs to 202 residues: Nucleoside triphosphate pyrophosphatase (202 aa).

D79 functions as the Proton acceptor in the catalytic mechanism.

The protein belongs to the Maf family. A divalent metal cation serves as cofactor.

It localises to the cytoplasm. It catalyses the reaction a ribonucleoside 5'-triphosphate + H2O = a ribonucleoside 5'-phosphate + diphosphate + H(+). The enzyme catalyses a 2'-deoxyribonucleoside 5'-triphosphate + H2O = a 2'-deoxyribonucleoside 5'-phosphate + diphosphate + H(+). Its function is as follows. Nucleoside triphosphate pyrophosphatase. May have a dual role in cell division arrest and in preventing the incorporation of modified nucleotides into cellular nucleic acids. This Rhodopseudomonas palustris (strain ATCC BAA-98 / CGA009) protein is Nucleoside triphosphate pyrophosphatase.